Consider the following 367-residue polypeptide: Developmentally-regulated GTP-binding protein 1 (367 aa).

An N-acetylserine modification is found at serine 2. The segment at 2–16 (SSTLAKIAEIEAEMA) is required for interaction with STK16. Position 22 is a (3S)-3-hydroxylysine (lysine 22). Residues 65–290 (ARIGFVGFPS…LLEKIWDYLK (226 aa)) enclose the OBG-type G domain. GTP-binding positions include 71 to 78 (GFPSVGKS), 96 to 100 (FTTLT), 117 to 120 (DLPG), 248 to 251 (NKID), and 271 to 273 (SAH). Residues serine 78 and threonine 98 each coordinate Mg(2+). Threonine 100 carries the post-translational modification Phosphothreonine; by STK16. In terms of domain architecture, TGS spans 290–366 (KLVRIYTKPK…EDEDVIQIVK (77 aa)).

The protein belongs to the TRAFAC class OBG-HflX-like GTPase superfamily. OBG GTPase family. In terms of assembly, interacts (via its C-terminal) with TAL1. Interacts with DFRP1/ZC3H15; this interaction prevents DRG1 poly-ubiquitination and degradation by proteasome. DRG1-ZC3H15/DFRP1 complex co-sediments with polysomes. Interacts with STK16. Interacts with JMJD7. In terms of processing, sumoylated by UBE2I in response to MEKK1-mediated stimuli. Hydroxylated (with S stereochemistry) at C-3 of Lys-22 by JMJD7. Post-translationally, phosphorylated at Thr-100 by STK16. In terms of processing, polyubiquitinated; this modification induces proteolytic degradation and is impaired by interaction with ZC3H15.

The protein localises to the nucleus. Its subcellular location is the cytoplasm. The catalysed reaction is GTP + H2O = GDP + phosphate + H(+). The GTPase activity is enhanced by potassium ions as well as by DFRP1 binding. In terms of biological role, catalyzes the conversion of GTP to GDP through hydrolysis of the gamma-phosphate bond in GTP. Appears to have an intrinsic GTPase activity that is stimulated by ZC3H15/DFRP1 binding likely by increasing the affinity for the potassium ions. When hydroxylated at C-3 of 'Lys-22' by JMJD7, may bind to RNA and play a role in translation. Binds to microtubules and promotes microtubule polymerization and bundling that are required for mitotic spindle assembly during prophase to anaphase transition. GTPase activity is not necessary for these microtubule-related functions. This Bos taurus (Bovine) protein is Developmentally-regulated GTP-binding protein 1 (DRG1).